Reading from the N-terminus, the 571-residue chain is Quinone-dependent D-lactate dehydrogenase (571 aa).

The 230-residue stretch at 44–273 (GGGPVFAVVR…FAVRTRTFPR (230 aa)) folds into the FAD-binding PCMH-type domain. FAD contacts are provided by residues 78 to 82 (ASNTG), 86 to 87 (GS), Gly145, Ser152, Gly162, and Val263.

This sequence belongs to the quinone-dependent D-lactate dehydrogenase family. It depends on FAD as a cofactor.

The protein resides in the cell membrane. It catalyses the reaction (R)-lactate + a quinone = a quinol + pyruvate. In terms of biological role, catalyzes the oxidation of D-lactate to pyruvate. Also has weak activity with L-lactate and DL-2-hydroxybutyrate. Electrons derived from D-lactate oxidation enter the electron transport chain. Essential for growth with D-lactate as sole carbon and energy source. The protein is Quinone-dependent D-lactate dehydrogenase of Corynebacterium glutamicum (strain ATCC 13032 / DSM 20300 / JCM 1318 / BCRC 11384 / CCUG 27702 / LMG 3730 / NBRC 12168 / NCIMB 10025 / NRRL B-2784 / 534).